The following is a 902-amino-acid chain: Desmocollin-2 (902 aa).

The N-terminal stretch at 1-27 is a signal peptide; that stretch reads MAAVGSMRSGSPAFGLGHLLTLAILAL. A propeptide spanning residues 28 to 135 is cleaved from the precursor; it reads ASDACKEVVL…TEKVLSRAKR (108 aa). Cadherin domains follow at residues 136-243, 244-355, 356-471, 472-579, and 580-694; these read RWAP…YPIF, TQKL…LPTF, TRTT…GPEC, IPPM…FIPK, and QTVV…RLGP. At 136 to 694 the chain is on the extracellular side; sequence RWAPIPCSML…TGYADVRLGP (559 aa). N-linked (GlcNAc...) asparagine glycosylation is present at Asn-166. Asn-392, Asn-546, and Asn-629 each carry an N-linked (GlcNAc...) asparagine glycan. A helical membrane pass occupies residues 695-715; it reads WAILAILLGIALLFCILFTLV. Residues 716 to 902 lie on the Cytoplasmic side of the membrane; that stretch reads CSVSRASKQQ…RTLAEVCAKR (187 aa). A phosphoserine mark is found at Ser-865, Ser-869, and Ser-874.

Interacts with DSP, PKP2 and JUP. Interacts with DSG3; the interaction may limit the interaction of DSC3 with p38MAPK family members and therefore repress p38MAPK signaling activation. Expressed in intestinal epithelial cells (at protein level). Expressed in the heart. Expressed in tongue, bladder, stomach, liver, kidney, and lung.

Its subcellular location is the cell membrane. The protein resides in the cell junction. It localises to the desmosome. Its function is as follows. A component of desmosome cell-cell junctions which are required for positive regulation of cellular adhesion. Promotes timely incorporation of DSG2 into desmosome intercellular junctions and promotes interaction of desmosome cell junctions with intermediate filament cytokeratin, via modulation of DSP phosphorylation. Plays an important role in desmosome-mediated maintenance of intestinal epithelial cell intercellular adhesion strength and barrier function. Positively regulates wound healing of intestinal mucosa via promotion of epithelial cell migration, and also plays a role in mechanotransduction of force between intestinal epithelial cells and extracellular matrix. May contribute to epidermal cell positioning (stratification) by mediating differential adhesiveness between cells that express different isoforms. May promote p38MAPK signaling activation that facilitates keratinocyte migration. The polypeptide is Desmocollin-2 (Dsc2) (Mus musculus (Mouse)).